We begin with the raw amino-acid sequence, 322 residues long: Ras association domain-containing protein 4 (322 aa).

The segment at 96 to 161 (EASPQDSKVP…SKSRAPSEAQ (66 aa)) is disordered. Ser142 carries the post-translational modification Phosphoserine. The region spanning 175-264 (YNHKTSVFTP…KIFLMEADLS (90 aa)) is the Ras-associating domain. The region spanning 271 to 318 (VAQYIKFEMPVLDSFVEKLKEEEEREIIKLTMKFQALRLTMLQRLEQL) is the SARAH domain.

In terms of assembly, interacts directly with activated KRAS in a GTP-dependent manner.

Its function is as follows. Potential tumor suppressor. May act as a KRAS effector protein. May promote apoptosis and cell cycle arrest. The polypeptide is Ras association domain-containing protein 4 (Rassf4) (Mus musculus (Mouse)).